A 57-amino-acid chain; its full sequence is Large ribosomal subunit protein bL32 (57 aa).

This sequence belongs to the bacterial ribosomal protein bL32 family.

The chain is Large ribosomal subunit protein bL32 from Geobacillus kaustophilus (strain HTA426).